Reading from the N-terminus, the 190-residue chain is Lipid A acyltransferase PagP (190 aa).

Residues 1 to 29 (MYVAMIIRKYFLIIALLLMPWLAIPSVSA) form the signal peptide. Catalysis depends on residues His62, Asp105, and Ser106.

The protein belongs to the lipid A palmitoyltransferase family. In terms of assembly, homodimer.

It localises to the cell outer membrane. The enzyme catalyses a lipid A + a 1,2-diacyl-sn-glycero-3-phosphocholine = a hepta-acyl lipid A + a 2-acyl-sn-glycero-3-phosphocholine. It carries out the reaction a lipid IVA + a 1,2-diacyl-sn-glycero-3-phosphocholine = a lipid IVB + a 2-acyl-sn-glycero-3-phosphocholine. It catalyses the reaction a lipid IIA + a 1,2-diacyl-sn-glycero-3-phosphocholine = a lipid IIB + a 2-acyl-sn-glycero-3-phosphocholine. Functionally, transfers a fatty acid residue from the sn-1 position of a phospholipid to the N-linked hydroxyfatty acid chain on the proximal unit of lipid A or its precursors. Required for resistance to cationic antimicrobial peptides (CAMPs). Modifications of lipid A with an acyl chain allow to evade host immune defenses by resisting antimicrobial peptides and attenuating the inflammatory response to infection triggered by lipopolysaccharide through the Toll-like receptor 4 (TLR4) signal transduction pathway. The polypeptide is Lipid A acyltransferase PagP (Salmonella typhimurium (strain LT2 / SGSC1412 / ATCC 700720)).